Reading from the N-terminus, the 115-residue chain is Meiotically up-regulated gene 168 protein (115 aa).

The tract at residues 82-115 (SVSPVHTKAEEPGLGLTPMNSADFSNKIASRYRS) is disordered. The segment covering 99-109 (PMNSADFSNKI) has biased composition (polar residues).

The protein resides in the nucleus. Functionally, has a role in meiosis. The polypeptide is Meiotically up-regulated gene 168 protein (mug168) (Schizosaccharomyces pombe (strain 972 / ATCC 24843) (Fission yeast)).